The following is a 418-amino-acid chain: Methylmalonic aciduria type A protein, mitochondrial (418 aa).

Residues 1 to 65 constitute a mitochondrion transit peptide; it reads MPMLLPHPHQ…LLSDGLKRKL (65 aa). GTP-binding positions include 150–158, aspartate 292, and 328–330; these read GPPGAGKST and SAR.

Belongs to the SIMIBI class G3E GTPase family. ArgK/MeaB subfamily. As to quaternary structure, homodimer. Interacts with MMUT (the apoenzyme form); the interaction is GTP dependent. As to expression, widely expressed. Highest expression is observed in liver and skeletal muscle.

The protein resides in the mitochondrion. The protein localises to the cytoplasm. It catalyses the reaction GTP + H2O = GDP + phosphate + H(+). GTPase activity is stimulated by MMUT. Its function is as follows. GTPase, binds and hydrolyzes GTP. Involved in intracellular vitamin B12 metabolism, mediates the transport of cobalamin (Cbl) into mitochondria for the final steps of adenosylcobalamin (AdoCbl) synthesis. Functions as a G-protein chaperone that assists AdoCbl cofactor delivery from MMAB to the methylmalonyl-CoA mutase (MMUT). Plays a dual role as both a protectase and a reactivase for MMUT. Protects MMUT from progressive inactivation by oxidation by decreasing the rate of the formation of the oxidized inactive cofactor hydroxocobalamin (OH2Cbl). Additionally acts a reactivase by promoting the replacement of OH2Cbl by the active cofactor AdoCbl, restoring the activity of MMUT in the presence and hydrolysis of GTP. The sequence is that of Methylmalonic aciduria type A protein, mitochondrial from Homo sapiens (Human).